We begin with the raw amino-acid sequence, 352 residues long: Alanine racemase (352 aa).

K33 (proton acceptor; specific for D-alanine) is an active-site residue. Position 33 is an N6-(pyridoxal phosphate)lysine (K33). Residue R129 coordinates substrate. Residue Y250 is the Proton acceptor; specific for L-alanine of the active site. Residue M298 coordinates substrate.

This sequence belongs to the alanine racemase family. Pyridoxal 5'-phosphate is required as a cofactor.

The enzyme catalyses L-alanine = D-alanine. Its pathway is amino-acid biosynthesis; D-alanine biosynthesis; D-alanine from L-alanine: step 1/1. Catalyzes the interconversion of L-alanine and D-alanine. May also act on other amino acids. This chain is Alanine racemase (alr), found in Neisseria meningitidis serogroup B (strain ATCC BAA-335 / MC58).